The following is a 226-amino-acid chain: Urease accessory protein UreF (226 aa).

The protein belongs to the UreF family. UreD, UreF and UreG form a complex that acts as a GTP-hydrolysis-dependent molecular chaperone, activating the urease apoprotein by helping to assemble the nickel containing metallocenter of UreC. The UreE protein probably delivers the nickel.

Its subcellular location is the cytoplasm. Required for maturation of urease via the functional incorporation of the urease nickel metallocenter. The protein is Urease accessory protein UreF of Janthinobacterium sp. (strain Marseille) (Minibacterium massiliensis).